A 369-amino-acid polypeptide reads, in one-letter code: MFGEMSGEYGELGVDKERLKEVGIELDKSKRSGVYLQEDQDAKTFSSFFEGVEVMSIKQAMEKYDWVKDYFWKILRKDQDEFTRMADTEDVNGYFIRSLPGAKVEIPVEACLYLKKVEKQRVHNIVIAEEGSELNIISGCTSHPGVAGMHIGISEFFVKKNAKLSFTMIHSWDTTIEVRPRTAIKVEEGGTFISNYILLNPVKLVQTYPTAYVEKDATAIFNSVIVALEGSVVDSGSRAVLMGENSRAEIISRTISKGGKIIARGHIIGDAPEVKGHLECKGLMLSESGLIDAIPELEARYPNVELSHEAAIGKIAEEGIFYLMSRGLSRDEAISAIVRGFMEIEIKGLPEALQEAIRRTIEMAERDLL.

The protein belongs to the iron-sulfur cluster assembly SufBD family.

In Archaeoglobus fulgidus (strain ATCC 49558 / DSM 4304 / JCM 9628 / NBRC 100126 / VC-16), this protein is Iron-sulfur cluster assembly SufBD family protein AF_2365.